The chain runs to 42 residues: Cytochrome b559 subunit beta (42 aa).

The chain crosses the membrane as a helical span at residues 17–33; sequence WLTIHALAVPTVFFLGA. H21 contacts heme.

The protein belongs to the PsbE/PsbF family. Heterodimer of an alpha subunit and a beta subunit. PSII is composed of 1 copy each of membrane proteins PsbA, PsbB, PsbC, PsbD, PsbE, PsbF, PsbH, PsbI, PsbJ, PsbK, PsbL, PsbM, PsbT, PsbX, PsbY, PsbZ, Psb30/Ycf12, at least 3 peripheral proteins of the oxygen-evolving complex and a large number of cofactors. It forms dimeric complexes. The cofactor is heme b.

The protein localises to the plastid. It localises to the chloroplast thylakoid membrane. This b-type cytochrome is tightly associated with the reaction center of photosystem II (PSII). PSII is a light-driven water:plastoquinone oxidoreductase that uses light energy to abstract electrons from H(2)O, generating O(2) and a proton gradient subsequently used for ATP formation. It consists of a core antenna complex that captures photons, and an electron transfer chain that converts photonic excitation into a charge separation. In Emiliania huxleyi (Coccolithophore), this protein is Cytochrome b559 subunit beta.